We begin with the raw amino-acid sequence, 457 residues long: Bifunctional protein GlmU (457 aa).

Residues 1–230 (MSKRYAVVLA…FEESLGVNDR (230 aa)) are pyrophosphorylase. UDP-N-acetyl-alpha-D-glucosamine is bound by residues 9–12 (LAAG), Lys-23, Gln-73, and 78–79 (GT). Asp-103 lines the Mg(2+) pocket. Residues Gly-140, Glu-155, Asn-170, and Asn-228 each contribute to the UDP-N-acetyl-alpha-D-glucosamine site. Asn-228 serves as a coordination point for Mg(2+). Residues 231–251 (IALAEASKLMQRRINDNHMRN) are linker. The tract at residues 252-457 (GVTLVNPENT…DYAKRLNHGK (206 aa)) is N-acetyltransferase. The UDP-N-acetyl-alpha-D-glucosamine site is built by Arg-333 and Lys-351. Catalysis depends on His-363, which acts as the Proton acceptor. UDP-N-acetyl-alpha-D-glucosamine is bound by residues Tyr-366 and Asn-377. Acetyl-CoA is bound by residues 386-387 (NY), Ala-423, and Arg-440.

The protein in the N-terminal section; belongs to the N-acetylglucosamine-1-phosphate uridyltransferase family. It in the C-terminal section; belongs to the transferase hexapeptide repeat family. Homotrimer. Mg(2+) is required as a cofactor.

Its subcellular location is the cytoplasm. It carries out the reaction alpha-D-glucosamine 1-phosphate + acetyl-CoA = N-acetyl-alpha-D-glucosamine 1-phosphate + CoA + H(+). It catalyses the reaction N-acetyl-alpha-D-glucosamine 1-phosphate + UTP + H(+) = UDP-N-acetyl-alpha-D-glucosamine + diphosphate. It participates in nucleotide-sugar biosynthesis; UDP-N-acetyl-alpha-D-glucosamine biosynthesis; N-acetyl-alpha-D-glucosamine 1-phosphate from alpha-D-glucosamine 6-phosphate (route II): step 2/2. Its pathway is nucleotide-sugar biosynthesis; UDP-N-acetyl-alpha-D-glucosamine biosynthesis; UDP-N-acetyl-alpha-D-glucosamine from N-acetyl-alpha-D-glucosamine 1-phosphate: step 1/1. The protein operates within bacterial outer membrane biogenesis; LPS lipid A biosynthesis. In terms of biological role, catalyzes the last two sequential reactions in the de novo biosynthetic pathway for UDP-N-acetylglucosamine (UDP-GlcNAc). The C-terminal domain catalyzes the transfer of acetyl group from acetyl coenzyme A to glucosamine-1-phosphate (GlcN-1-P) to produce N-acetylglucosamine-1-phosphate (GlcNAc-1-P), which is converted into UDP-GlcNAc by the transfer of uridine 5-monophosphate (from uridine 5-triphosphate), a reaction catalyzed by the N-terminal domain. This is Bifunctional protein GlmU from Listeria welshimeri serovar 6b (strain ATCC 35897 / DSM 20650 / CCUG 15529 / CIP 8149 / NCTC 11857 / SLCC 5334 / V8).